A 535-amino-acid chain; its full sequence is F-box protein At1g56610 (535 aa).

3 helical membrane passes run 3–23, 37–57, and 82–102; these read FALV…SSSI, VLLL…LCLF, and LAPH…SLLF. An F-box; degenerate domain is found at 73-119; it reads TELCDLPKCLAPHILSWLPTKTAVTVSLLFMKGWWRSEMKNLSSLKF.

In terms of assembly, part of a SCF (ASK-cullin-F-box) protein ligase complex. Interacts with ASK4.

The protein localises to the membrane. It functions in the pathway protein modification; protein ubiquitination. In terms of biological role, component of SCF(ASK-cullin-F-box) E3 ubiquitin ligase complexes, which may mediate the ubiquitination and subsequent proteasomal degradation of target proteins. This chain is F-box protein At1g56610, found in Arabidopsis thaliana (Mouse-ear cress).